A 996-amino-acid chain; its full sequence is Disabled homolog 2-interacting protein (996 aa).

The region spanning 1–118 (MENLRRAVHP…AGRQFVEKWY (118 aa)) is the C2 domain. The Ras-GAP domain maps to 194-402 (GKVKDFLTDL…TNMQRFLLEI (209 aa)). A necessary for interaction with AKT1 region spans residues 453–750 (LRDVHTALST…RTPPTMLSTL (298 aa)). Polar residues predominate over residues 460-475 (LSTPGSGQLPGTNDLA). Disordered regions lie at residues 460–486 (LSTPGSGQLPGTNDLASTPGSGSSSVS) and 522–545 (RSSGVQPSPARSSSYSEANEPDLQ). The segment covering 476-486 (STPGSGSSSVS) has biased composition (low complexity). A compositionally biased stretch (polar residues) spans 522-538 (RSSGVQPSPARSSSYSE). The residue at position 535 (Ser535) is a Phosphoserine; by MAP3K5 and RIPK1. The residue at position 554 (Ser554) is a Phosphoserine. Disordered regions lie at residues 611-630 (VPTPTTPGTSEGAPGRPQLL), 650-672 (PRGLGDSGSEGHSSLSSHSNSEE), 702-805 (SLTE…SPNA), 822-841 (EDEGLGPDPPHRDRLRSKEE), and 971-996 (RNGVSPTNPTKLQITENGEFRNSSNC). Positions 659–672 (EGHSSLSSHSNSEE) are enriched in low complexity. Residues 726–738 (QPPPPPPPPPPAP) are compositionally biased toward pro residues. 2 stretches are compositionally biased toward polar residues: residues 746–762 (MLSTLQYPRPSSGTLAS) and 774–783 (LRQQSSSSKG). Ser785 and Ser802 each carry phosphoserine. Residues 830 to 841 (PPHRDRLRSKEE) show a composition bias toward basic and acidic residues. The stretch at 832-966 (HRDRLRSKEE…SALTQLKERY (135 aa)) forms a coiled coil. A compositionally biased stretch (polar residues) spans 974–996 (VSPTNPTKLQITENGEFRNSSNC).

In terms of assembly, on plasma membrane, exists in an inactive form complexed with TNFR1; in response to TNF-alpha, dissociates from TNFR1 complex, translocates to cytoplasm and forms part of an intracellular signaling complex comprising TRADD, RIPK1, TRAF2 and MAP3K5. Interacts (via NPXY motif) with DAB2 (via PID domain). Interacts (via PH domain) with ERN1. Part of a cytoplasmic complex made of HIPK1, DAB2IP and MAP3K5 in response to TNF-alpha; this complex formation promotes MAP3K5-JNK activation and subsequent apoptosis. Interacts (via N-terminal domain) with JAK2; the interaction occurs in a IFNG/IFN-gamma-dependent manner and inhibits JAK2 autophosphorylation activity. Interacts (via C2 domain) with GSK3B; the interaction stimulates GSK3B kinase activation. Interacts (via C2 domain) with PPP2CA. Interacts (via proline-rich motif) with a regulatory p85 subunit (via SH3 domain) of the PI3K complex; the interaction inhibits the PI3K-AKT complex activity in a TNF-alpha-dependent manner in prostate cancer (PCa) cells. Interacts with AKT1; the interaction is increased in a TNF-alpha-induced manner. Interacts (via C2 domain and active form preferentially) with KDR/VEGFR2 (tyrosine-phosphorylated active form preferentially); the interaction occurs at the late phase of VEGFA response and inhibits KDR/VEGFR2 activity. Interacts (via N-terminus C2 domain) with MAP3K5 ('Ser-966' dephosphorylated form preferentially); the interaction occurs in a TNF-alpha-induced manner. Interacts (via Ras-GAP domain) with the catalytic subunit of protein phosphatase PP2A; the interaction occurs in resting endothelial cells, is further enhanced by TNF-alpha stimulation and is required to bridge PP2A to MAP3K5. Interacts (via C-terminus PER domain) with TRAF2 (via zinc fingers); the interaction occurs in a TNF-alpha-dependent manner. Interacts with 14-3-3 proteins; the interaction occurs in a TNF-alpha-dependent manner. Interacts (via Ras-GAP domain) with RIPK1 (via kinase domain); the interaction occurs in a TNF-alpha-dependent manner. Interacts with DAB1 and DAB2. Interacts with RAB40C; acts as a GAP for RAB40C. In terms of processing, in response to TNF-alpha-induction, phosphorylated at Ser-535; phosphorylation leads to a conformational change, and thus, increases its association with 14-3-3 proteins, MAP3K5, RIPK1 and TRAF2 in endothelial cells; also stimulates regulatory p85 subunit sequestring and PI3K-p85 complex activity inhibition. Expressed in brain, lung, thymus, bladder and skeletal muscle. Up-regulatedd during prostate degeneration.

The protein localises to the cytoplasm. The protein resides in the cell membrane. It is found in the membrane. Its subcellular location is the cell projection. It localises to the dendrite. Functions as a scaffold protein implicated in the regulation of a large spectrum of both general and specialized signaling pathways. Involved in several processes such as innate immune response, inflammation and cell growth inhibition, apoptosis, cell survival, angiogenesis, cell migration and maturation. Also plays a role in cell cycle checkpoint control; reduces G1 phase cyclin levels resulting in G0/G1 cell cycle arrest. Mediates signal transduction by receptor-mediated inflammatory signals, such as the tumor necrosis factor (TNF), interferon (IFN) or lipopolysaccharide (LPS). Modulates the balance between phosphatidylinositol 3-kinase (PI3K)-AKT-mediated cell survival and apoptosis stimulated kinase (MAP3K5)-JNK signaling pathways; sequesters both AKT1 and MAP3K5 and counterbalances the activity of each kinase by modulating their phosphorylation status in response to pro-inflammatory stimuli. Acts as a regulator of the endoplasmic reticulum (ER) unfolded protein response (UPR) pathway; specifically involved in transduction of the ER stress-response to the JNK cascade through ERN1. Mediates TNF-alpha-induced apoptosis activation by facilitating dissociation of inhibitor 14-3-3 from MAP3K5; recruits the PP2A phosphatase complex which dephosphorylates MAP3K5 on 'Ser-966', leading to the dissociation of 13-3-3 proteins and activation of the MAP3K5-JNK signaling pathway in endothelial cells. Acts a negative regulator in the IFN-gamma-mediated JAK-STAT signaling cascade by inhibiting smooth muscle cell (VSMCs) proliferation and intimal expansion, and thus, prevents graft arteriosclerosis (GA). Acts as a GTPase-activating protein (GAP) for the ADP ribosylation factor 6 (ARF6). Promotes hydrolysis of the ARF6-bound GTP and thus, negatively regulates phosphatidylinositol 4,5-bisphosphate (PIP2)-dependent TLR4-TIRAP-MyD88 and NF-kappa-B signaling pathways in endothelial cells in response to lipopolysaccharides (LPS). Binds specifically to phosphatidylinositol 4-phosphate (PtdIns4P) and phosphatidylinositol 3-phosphate (PtdIns3P). In response to vascular endothelial growth factor (VEGFA), acts as a negative regulator of the VEGFR2-PI3K-mediated angiogenic signaling pathway by inhibiting endothelial cell migration and tube formation. In the developing brain, promotes both the transition from the multipolar to the bipolar stage and the radial migration of cortical neurons from the ventricular zone toward the superficial layer of the neocortex in a glial-dependent locomotion process. Probable downstream effector of the Reelin signaling pathway; promotes Purkinje cell (PC) dendrites development and formation of cerebellar synapses. Also functions as a tumor suppressor protein in prostate cancer progression; prevents cell proliferation and epithelial-to-mesenchymal transition (EMT) through activation of the glycogen synthase kinase-3 beta (GSK3B)-induced beta-catenin and inhibition of PI3K-AKT and Ras-MAPK survival downstream signaling cascades, respectively. Mediates TNF/TRAF2-induced MAP3K5-JNK activation, while it inhibits CHUK-NF-kappa-B signaling. Functions as a Ras GTPase-activating protein. May act as a tumor suppressor gene. The sequence is that of Disabled homolog 2-interacting protein (Dab2ip) from Rattus norvegicus (Rat).